We begin with the raw amino-acid sequence, 244 residues long: 5-oxoprolinase subunit A (244 aa).

The protein belongs to the LamB/PxpA family. Forms a complex composed of PxpA, PxpB and PxpC.

The catalysed reaction is 5-oxo-L-proline + ATP + 2 H2O = L-glutamate + ADP + phosphate + H(+). In terms of biological role, catalyzes the cleavage of 5-oxoproline to form L-glutamate coupled to the hydrolysis of ATP to ADP and inorganic phosphate. In Salmonella paratyphi A (strain ATCC 9150 / SARB42), this protein is 5-oxoprolinase subunit A.